The chain runs to 249 residues: Probable transcriptional regulatory protein Minf_0651 (249 aa).

Belongs to the TACO1 family.

It is found in the cytoplasm. The chain is Probable transcriptional regulatory protein Minf_0651 from Methylacidiphilum infernorum (isolate V4) (Methylokorus infernorum (strain V4)).